The following is a 182-amino-acid chain: uncharacterized protein (182 aa).

Disordered regions lie at residues M1–L73 and S105–R182. Low complexity-rich tracts occupy residues R43 to S68 and S105 to T121. Residues A122–S131 show a composition bias toward pro residues.

This is an uncharacterized protein from Caenorhabditis elegans.